The chain runs to 465 residues: Ribulose bisphosphate carboxylase large chain (465 aa).

Residue Lys4 is modified to N6,N6,N6-trimethyllysine. Positions 113 and 163 each coordinate substrate. The active-site Proton acceptor is Lys165. Residue Lys167 participates in substrate binding. 3 residues coordinate Mg(2+): Lys191, Asp193, and Glu194. At Lys191 the chain carries N6-carboxylysine. His284 serves as the catalytic Proton acceptor. Substrate-binding residues include Arg285, His317, and Ser369.

It belongs to the RuBisCO large chain family. Type I subfamily. Heterohexadecamer of 8 large chains and 8 small chains; disulfide-linked. The disulfide link is formed within the large subunit homodimers. The cofactor is Mg(2+). In terms of processing, the disulfide bond which can form in the large chain dimeric partners within the hexadecamer appears to be associated with oxidative stress and protein turnover.

The protein localises to the plastid. It is found in the chloroplast. It catalyses the reaction 2 (2R)-3-phosphoglycerate + 2 H(+) = D-ribulose 1,5-bisphosphate + CO2 + H2O. It carries out the reaction D-ribulose 1,5-bisphosphate + O2 = 2-phosphoglycolate + (2R)-3-phosphoglycerate + 2 H(+). RuBisCO catalyzes two reactions: the carboxylation of D-ribulose 1,5-bisphosphate, the primary event in carbon dioxide fixation, as well as the oxidative fragmentation of the pentose substrate in the photorespiration process. Both reactions occur simultaneously and in competition at the same active site. The protein is Ribulose bisphosphate carboxylase large chain of Ilex crenata (Japanese holly).